The chain runs to 154 residues: Large ribosomal subunit protein uL30 (154 aa).

Belongs to the universal ribosomal protein uL30 family. In terms of assembly, part of the 50S ribosomal subunit.

This is Large ribosomal subunit protein uL30 from Methanococcus vannielii.